A 254-amino-acid chain; its full sequence is 3-deoxy-manno-octulosonate cytidylyltransferase (254 aa).

It belongs to the KdsB family.

Its subcellular location is the cytoplasm. It carries out the reaction 3-deoxy-alpha-D-manno-oct-2-ulosonate + CTP = CMP-3-deoxy-beta-D-manno-octulosonate + diphosphate. Its pathway is nucleotide-sugar biosynthesis; CMP-3-deoxy-D-manno-octulosonate biosynthesis; CMP-3-deoxy-D-manno-octulosonate from 3-deoxy-D-manno-octulosonate and CTP: step 1/1. It participates in bacterial outer membrane biogenesis; lipopolysaccharide biosynthesis. In terms of biological role, activates KDO (a required 8-carbon sugar) for incorporation into bacterial lipopolysaccharide in Gram-negative bacteria. The protein is 3-deoxy-manno-octulosonate cytidylyltransferase of Geobacter metallireducens (strain ATCC 53774 / DSM 7210 / GS-15).